The chain runs to 2321 residues: Neurogenic locus notch homolog protein 3 (2321 aa).

Residues 1-14 are compositionally biased toward basic residues; sequence MGPGARGRRRRRRP. The disordered stretch occupies residues 1–26; sequence MGPGARGRRRRRRPMSPPPPPPPVRA. An N-terminal signal peptide occupies residues 1–39; that stretch reads MGPGARGRRRRRRPMSPPPPPPPVRALPLLLLLAGPGAA. Residues 15–25 are compositionally biased toward pro residues; that stretch reads MSPPPPPPPVR. 3 EGF-like domains span residues 40-77, 78-118, and 119-156; these read APPCLDGSPCANGGRCTQLPSREAACLCPPGWVGERCQ, LEDP…PDCS, and LPDPCLSSPCAHGARCSVGPDGRFLCSCPPGYQGRSCR. Residues 40 to 1643 lie on the Extracellular side of the membrane; sequence APPCLDGSPC…LEPPEPSVPL (1604 aa). Intrachain disulfides connect C43–C55, C49–C65, C67–C76, C82–C93, C87–C106, C108–C117, C123–C134, C128–C144, C146–C155, C162–C174, C168–C183, C185–C194, C201–C212, C206–C222, C224–C233, C240–C251, C245–C260, C262–C271, C278–C291, C285–C300, C302–C311, C318–C329, C323–C338, C340–C349, C355–C366, C360–C377, C379–C388, C395–C408, C402–C417, C419–C428, C435–C446, C440–C455, C457–C466, C473–C484, C478–C493, C495–C504, C511–C522, C516–C531, C533–C542, C549–C559, C554–C568, C570–C579, C586–C597, C591–C606, C608–C617, C624–C634, C629–C643, C645–C654, C661–C672, C666–C681, C683–C692, C699–C709, C704–C718, C720–C729, C738–C749, C743–C758, C760–C769, C775–C786, C780–C796, C798–C807, C814–C826, C820–C835, C837–C846, C853–C864, C858–C873, C875–C884, C891–C901, C896–C910, C912–C921, C928–C939, C933–C948, C950–C959, C966–C977, C971–C986, C988–C997, C1004–C1015, C1009–C1022, C1024–C1033, C1040–C1061, C1055–C1070, C1072–C1081, C1088–C1099, C1093–C1108, C1110–C1119, C1126–C1137, C1131–C1146, C1148–C1157, C1164–C1182, C1176–C1191, C1193–C1202, C1209–C1222, C1214–C1232, C1234–C1243, C1250–C1261, C1255–C1275, C1277–C1286, C1293–C1304, C1298–C1313, and C1315–C1324. One can recognise an EGF-like 4; calcium-binding domain in the interval 158–195; it reads DVDECRVGEPCRHGGTCLNTPGSFRCQCPAGYTGPLCE. One can recognise an EGF-like 5 domain in the interval 197–234; the sequence is PAVPCAPSPCRNGGTCRQSGDLTYDCACLPGFEGQNCE. The EGF-like 6; calcium-binding domain maps to 236–272; it reads NVDDCPGHRCLNGGTCVDGVNTYNCQCPPEWTGQFCT. The EGF-like 7 domain maps to 274-312; that stretch reads DVDECQLQPNACHNGGTCFNTLGGHSCVCVNGWTGESCS. In terms of domain architecture, EGF-like 8; calcium-binding spans 314 to 350; the sequence is NIDDCATAVCFHGATCHDRVASFYCACPMGKTGLLCH. The region spanning 351–389 is the EGF-like 9 domain; it reads LDDACVSNPCHEDAICDTNPVNGRAICTCPPGFTGGACD. One can recognise an EGF-like 10; calcium-binding domain in the interval 391–429; the sequence is DVDECSIGANPCEHLGRCVNTQGSFLCQCGRGYTGPRCE. Residues 431-467 form the EGF-like 11; calcium-binding domain; that stretch reads DVNECLSGPCRNQATCLDRIGQFTCICMAGFTGTYCE. An EGF-like 12; calcium-binding domain is found at 469–505; that stretch reads DIDECQSSPCVNGGVCKDRVNGFSCTCPSGFSGSTCQ. The EGF-like 13; calcium-binding domain maps to 507-543; sequence DVDECASTPCRNGAKCVDQPDGYECRCAEGFEGTLCD. Positions 545–580 constitute an EGF-like 14; calcium-binding domain; that stretch reads NVDDCSPDPCHHGRCVDGIASFSCACAPGYTGTRCE. In terms of domain architecture, EGF-like 15; calcium-binding spans 582–618; sequence QVDECRSQPCRHGGKCLDLVDKYLCRCPSGTTGVNCE. Positions 620–655 constitute an EGF-like 16; calcium-binding domain; that stretch reads NIDDCASNPCTFGVCRDGINRYDCVCQPGFTGPLCN. Residues 657 to 693 form the EGF-like 17; calcium-binding domain; it reads EINECASSPCGEGGSCVDGENGFRCLCPPGSLPPLCL. 3 consecutive EGF-like domains span residues 695–730, 734–770, and 771–808; these read PSHPCAHEPCSHGICYDAPGGFRCVCEPGWSGPRCS, ARDACESQPCRAGGTCSSDGMGFHCTCPPGVQGRQCE, and LLSPCTPNPCEHGGRCESAPGQLPVCSCPQGWQGPRCQ. In terms of domain architecture, EGF-like 21; calcium-binding spans 810-847; sequence DVDECAGPAPCGPHGICTNLAGSFSCTCHGGYTGPSCD. Residues 849-885 form the EGF-like 22; calcium-binding domain; it reads DINDCDPNPCLNGGSCQDGVGSFSCSCLPGFAGPRCA. Residues 887-922 enclose the EGF-like 23; calcium-binding domain; sequence DVDECLSNPCGPGTCTDHVASFTCTCPPGYGGFHCE. EGF-like domains follow at residues 924–960, 962–998, 1000–1034, 1036–1082, and 1084–1120; these read DLPDCSPSSCFNGGTCVDGVNSFSCLCRPGYTGAHCQ, EADPCLSRPCLHGGVCSAAHPGFRCTCLESFTGPQCQ, LVDWCSRQPCQNGGRCVQTGAYCLCPPGWSGRLCD, RSLP…SHCE, and EVDPCLAQPCQHGGTCRGYMGGYMCECLPGYNGDNCE. The 37-residue stretch at 1122–1158 folds into the EGF-like 29; calcium-binding domain; it reads DVDECASQPCQHGGSCIDLVARYLCSCPPGTLGVLCE. The 44-residue stretch at 1160 to 1203 folds into the EGF-like 30; calcium-binding domain; sequence NEDDCGPGPPLDSGPRCLHNGTCVDLVGGFRCTCPPGYTGLRCE. The N-linked (GlcNAc...) asparagine glycan is linked to N1179. EGF-like domains are found at residues 1205-1244, 1246-1287, 1289-1325, and 1335-1373; these read DINECRSGACHAAHTRDCLQDPGGGFRCLCHAGFSGPRCQ, VLSP…PRCE, VARSCRELQCPVGVPCQQTPRGPRCACPPGLSGPSCR, and SNASCAAAPCLHGGSCRPAPLAPFFRCACAQGWTGPRCE. N1336 is a glycosylation site (N-linked (GlcNAc...) asparagine). Disulfide bonds link C1339-C1350, C1344-C1361, C1363-C1372, C1387-C1410, C1392-C1405, C1401-C1417, C1428-C1451, C1433-C1446, C1442-C1458, C1467-C1493, C1475-C1488, and C1484-C1500. LNR repeat units lie at residues 1387 to 1427, 1428 to 1458, and 1467 to 1505; these read CPRA…PWRQ, CEALQCWRLFNNSRCDPACSSPACLYDNFDC, and CNPVYEKYCADHFADGRCDQGCNTEECGWDGLDCASEVP. N1438 is a glycosylation site (N-linked (GlcNAc...) asparagine). A helical membrane pass occupies residues 1644–1664; the sequence is LPLLVAGAVLLLVILVLGVMV. The Cytoplasmic portion of the chain corresponds to 1665–2321; that stretch reads ARRKREHSTL…EVTPKRQVLA (657 aa). 5 ANK repeats span residues 1838–1867, 1871–1901, 1905–1934, 1938–1967, and 1971–2000; these read TGETALHLAARYARADAAKRLLDAGADTNA, SGRTPLHTAVTADAQGVFQILIRNRSTDLDA, DGSTALILAARLAVEGMVEELIASHADVNA, LGKSALHWAAAVNNVEATLALLKNGANKDM, and KEETPLFLAAREGSYEAAKLLLDHFANREI. Positions 2024–2120 are disordered; the sequence is LDQPSGPRSP…FGGPPASPGG (97 aa). A compositionally biased stretch (low complexity) spans 2039–2053; sequence LGPLLCPPGAFLPGL. Omega-N-methylarginine is present on R2174. The disordered stretch occupies residues 2190–2321; the sequence is APGPQLLNPG…EVTPKRQVLA (132 aa). Over residues 2269-2289 the composition is skewed to low complexity; that stretch reads STPSPATATGAMATTTGALPA. Polar residues predominate over residues 2296–2308; the sequence is VPSSLAQAQTQLG.

Belongs to the NOTCH family. In terms of assembly, heterodimer of a C-terminal fragment N(TM) and a N-terminal fragment N(EC) which are probably linked by disulfide bonds. Interacts with MAML1, MAML2 and MAML3 which act as transcriptional coactivators for NOTCH3. Interacts with PSMA1. Interacts with HIF1AN. Synthesized in the endoplasmic reticulum as an inactive form which is proteolytically cleaved by a furin-like convertase in the trans-Golgi network before it reaches the plasma membrane to yield an active, ligand-accessible form. Cleavage results in a C-terminal fragment N(TM) and a N-terminal fragment N(EC). Following ligand binding, it is cleaved by TNF-alpha converting enzyme (TACE) to yield a membrane-associated intermediate fragment called notch extracellular truncation (NEXT). This fragment is then cleaved by presenilin dependent gamma-secretase to release a notch-derived peptide containing the intracellular domain (NICD) from the membrane. In terms of processing, phosphorylated. Post-translationally, hydroxylated by HIF1AN. As to expression, ubiquitously expressed in fetal and adult tissues.

The protein resides in the cell membrane. Its subcellular location is the nucleus. Its function is as follows. Functions as a receptor for membrane-bound ligands Jagged1, Jagged2 and Delta1 to regulate cell-fate determination. Upon ligand activation through the released notch intracellular domain (NICD) it forms a transcriptional activator complex with RBPJ/RBPSUH and activates genes of the enhancer of split locus. Affects the implementation of differentiation, proliferation and apoptotic programs. In Homo sapiens (Human), this protein is Neurogenic locus notch homolog protein 3 (NOTCH3).